A 194-amino-acid chain; its full sequence is RNA polymerase II subunit A C-terminal domain phosphatase SSU72 like protein 1 (194 aa).

Belongs to the SSU72 phosphatase family.

It localises to the nucleus. The enzyme catalyses O-phospho-L-seryl-[protein] + H2O = L-seryl-[protein] + phosphate. It carries out the reaction O-phospho-L-threonyl-[protein] + H2O = L-threonyl-[protein] + phosphate. In terms of biological role, protein phosphatase that catalyzes the dephosphorylation of the C-terminal domain of RNA polymerase II. Plays a role in RNA processing and termination. This Homo sapiens (Human) protein is RNA polymerase II subunit A C-terminal domain phosphatase SSU72 like protein 1.